A 912-amino-acid chain; its full sequence is WD repeat-containing protein 44 (912 aa).

3 disordered regions span residues aspartate 206–aspartate 352, serine 399–lysine 426, and arginine 460–tyrosine 481. Residues asparagine 236–proline 258 show a composition bias toward pro residues. A compositionally biased stretch (basic and acidic residues) spans glycine 264–lysine 278. A compositionally biased stretch (polar residues) spans serine 288–serine 311. Residues lysine 410–lysine 422 are compositionally biased toward basic and acidic residues. Over residues aspartate 469 to glycine 478 the composition is skewed to acidic residues. The WD 1 repeat unit spans residues glutamate 511–asparagine 550. The interval glutamate 559–lysine 594 is disordered. Over residues serine 563–lysine 575 the composition is skewed to low complexity. 7 WD repeats span residues glycine 608–cysteine 646, glutamine 648–tryptophan 688, glycine 693–glutamine 732, arginine 743–lysine 782, valine 787–threonine 826, alanine 841–proline 880, and glycine 882–serine 912. The tract at residues alanine 861–glycine 882 is disordered.

Its subcellular location is the cytoplasm. The protein resides in the cytosol. It is found in the perinuclear region. It localises to the endosome membrane. The protein localises to the golgi apparatus. Its subcellular location is the trans-Golgi network. In terms of biological role, downstream effector for rab11. May be involved in vesicle recycling. May also be involved in the inhibition of the intracellular ciliogenesis pathway. The chain is WD repeat-containing protein 44 (wdr44) from Xenopus laevis (African clawed frog).